The primary structure comprises 290 residues: 4-hydroxy-tetrahydrodipicolinate synthase (290 aa).

Residue T44 participates in pyruvate binding. Y132 acts as the Proton donor/acceptor in catalysis. The Schiff-base intermediate with substrate role is filled by K160. I202 contacts pyruvate.

Belongs to the DapA family. As to quaternary structure, homotetramer; dimer of dimers.

It localises to the cytoplasm. It carries out the reaction L-aspartate 4-semialdehyde + pyruvate = (2S,4S)-4-hydroxy-2,3,4,5-tetrahydrodipicolinate + H2O + H(+). The protein operates within amino-acid biosynthesis; L-lysine biosynthesis via DAP pathway; (S)-tetrahydrodipicolinate from L-aspartate: step 3/4. Catalyzes the condensation of (S)-aspartate-beta-semialdehyde [(S)-ASA] and pyruvate to 4-hydroxy-tetrahydrodipicolinate (HTPA). This Geobacter sulfurreducens (strain ATCC 51573 / DSM 12127 / PCA) protein is 4-hydroxy-tetrahydrodipicolinate synthase.